Here is a 459-residue protein sequence, read N- to C-terminus: Ribulose bisphosphate carboxylase large chain (459 aa).

K4 is modified (N6,N6,N6-trimethyllysine). Substrate is bound by residues N113 and T163. K165 serves as the catalytic Proton acceptor. Residue K167 coordinates substrate. Mg(2+) is bound by residues K191, D193, and E194. At K191 the chain carries N6-carboxylysine. Catalysis depends on H284, which acts as the Proton acceptor. Residues R285, H317, and S369 each coordinate substrate.

It belongs to the RuBisCO large chain family. Type I subfamily. Heterohexadecamer of 8 large chains and 8 small chains; disulfide-linked. The disulfide link is formed within the large subunit homodimers. Mg(2+) serves as cofactor. Post-translationally, the disulfide bond which can form in the large chain dimeric partners within the hexadecamer appears to be associated with oxidative stress and protein turnover.

It is found in the plastid. Its subcellular location is the chloroplast. The catalysed reaction is 2 (2R)-3-phosphoglycerate + 2 H(+) = D-ribulose 1,5-bisphosphate + CO2 + H2O. It carries out the reaction D-ribulose 1,5-bisphosphate + O2 = 2-phosphoglycolate + (2R)-3-phosphoglycerate + 2 H(+). Its function is as follows. RuBisCO catalyzes two reactions: the carboxylation of D-ribulose 1,5-bisphosphate, the primary event in carbon dioxide fixation, as well as the oxidative fragmentation of the pentose substrate in the photorespiration process. Both reactions occur simultaneously and in competition at the same active site. This is Ribulose bisphosphate carboxylase large chain from Geum quellyon (Chilean avens).